The chain runs to 179 residues: Large ribosomal subunit protein uL5 (179 aa).

This sequence belongs to the universal ribosomal protein uL5 family. Part of the 50S ribosomal subunit; part of the 5S rRNA/L5/L18/L25 subcomplex. Contacts the 5S rRNA and the P site tRNA. Forms a bridge to the 30S subunit in the 70S ribosome.

This is one of the proteins that bind and probably mediate the attachment of the 5S RNA into the large ribosomal subunit, where it forms part of the central protuberance. In the 70S ribosome it contacts protein S13 of the 30S subunit (bridge B1b), connecting the 2 subunits; this bridge is implicated in subunit movement. Contacts the P site tRNA; the 5S rRNA and some of its associated proteins might help stabilize positioning of ribosome-bound tRNAs. The polypeptide is Large ribosomal subunit protein uL5 (Enterococcus faecalis (strain ATCC 700802 / V583)).